The following is a 454-amino-acid chain: tRNA(Ile)-lysidine synthase (454 aa).

Position 31-36 (31-36 (SGGADS)) interacts with ATP.

It belongs to the tRNA(Ile)-lysidine synthase family.

The protein localises to the cytoplasm. It carries out the reaction cytidine(34) in tRNA(Ile2) + L-lysine + ATP = lysidine(34) in tRNA(Ile2) + AMP + diphosphate + H(+). Its function is as follows. Ligates lysine onto the cytidine present at position 34 of the AUA codon-specific tRNA(Ile) that contains the anticodon CAU, in an ATP-dependent manner. Cytidine is converted to lysidine, thus changing the amino acid specificity of the tRNA from methionine to isoleucine. The protein is tRNA(Ile)-lysidine synthase of Porphyromonas gingivalis (strain ATCC BAA-308 / W83).